Consider the following 408-residue polypeptide: LL-diaminopimelate aminotransferase (408 aa).

The substrate site is built by Y15 and G42. Pyridoxal 5'-phosphate-binding positions include Y72, 108–109 (SK), Y132, N187, Y218, and 246–248 (SFS). Substrate-binding residues include K109, Y132, and N187. Position 249 is an N6-(pyridoxal phosphate)lysine (K249). Residues R257 and N292 each contribute to the pyridoxal 5'-phosphate site. Positions 292 and 388 each coordinate substrate.

Belongs to the class-I pyridoxal-phosphate-dependent aminotransferase family. LL-diaminopimelate aminotransferase subfamily. Homodimer. Pyridoxal 5'-phosphate serves as cofactor.

The enzyme catalyses (2S,6S)-2,6-diaminopimelate + 2-oxoglutarate = (S)-2,3,4,5-tetrahydrodipicolinate + L-glutamate + H2O + H(+). Its pathway is amino-acid biosynthesis; L-lysine biosynthesis via DAP pathway; LL-2,6-diaminopimelate from (S)-tetrahydrodipicolinate (aminotransferase route): step 1/1. Involved in the synthesis of meso-diaminopimelate (m-DAP or DL-DAP), required for both lysine and peptidoglycan biosynthesis. Catalyzes the direct conversion of tetrahydrodipicolinate to LL-diaminopimelate. This Leptospira borgpetersenii serovar Hardjo-bovis (strain JB197) protein is LL-diaminopimelate aminotransferase.